The chain runs to 181 residues: NAD(P)H-quinone oxidoreductase subunit 6, chloroplastic (181 aa).

The next 5 helical transmembrane spans lie at 13–33, 35–55, 64–84, 98–118, and 152–172; these read PILY…VFFG, IIYS…LYLL, AQIL…IMLI, FGDI…IIMI, and LLPF…AITI.

The protein belongs to the complex I subunit 6 family. As to quaternary structure, NDH is composed of at least 16 different subunits, 5 of which are encoded in the nucleus.

The protein localises to the plastid. Its subcellular location is the chloroplast thylakoid membrane. The catalysed reaction is a plastoquinone + NADH + (n+1) H(+)(in) = a plastoquinol + NAD(+) + n H(+)(out). The enzyme catalyses a plastoquinone + NADPH + (n+1) H(+)(in) = a plastoquinol + NADP(+) + n H(+)(out). Functionally, NDH shuttles electrons from NAD(P)H:plastoquinone, via FMN and iron-sulfur (Fe-S) centers, to quinones in the photosynthetic chain and possibly in a chloroplast respiratory chain. The immediate electron acceptor for the enzyme in this species is believed to be plastoquinone. Couples the redox reaction to proton translocation, and thus conserves the redox energy in a proton gradient. The sequence is that of NAD(P)H-quinone oxidoreductase subunit 6, chloroplastic (ndhG) from Staurastrum punctulatum (Green alga).